Reading from the N-terminus, the 299-residue chain is tRNA dimethylallyltransferase (299 aa).

G22 to T29 provides a ligand contact to ATP. T24–T29 is a binding site for substrate. 2 interaction with substrate tRNA regions span residues D47–Q50 and Q172–R176.

Belongs to the IPP transferase family. In terms of assembly, monomer. Requires Mg(2+) as cofactor.

It catalyses the reaction adenosine(37) in tRNA + dimethylallyl diphosphate = N(6)-dimethylallyladenosine(37) in tRNA + diphosphate. Catalyzes the transfer of a dimethylallyl group onto the adenine at position 37 in tRNAs that read codons beginning with uridine, leading to the formation of N6-(dimethylallyl)adenosine (i(6)A). The chain is tRNA dimethylallyltransferase from Endomicrobium trichonymphae.